A 399-amino-acid chain; its full sequence is Phosphoglycerate kinase (399 aa).

Substrate is bound by residues 22-24 (DLN), R37, 60-63 (HFGR), R119, and R152. Residues K202, E324, and 354 to 357 (GGDT) each bind ATP.

The protein belongs to the phosphoglycerate kinase family. As to quaternary structure, monomer.

It localises to the cytoplasm. It carries out the reaction (2R)-3-phosphoglycerate + ATP = (2R)-3-phospho-glyceroyl phosphate + ADP. The protein operates within carbohydrate degradation; glycolysis; pyruvate from D-glyceraldehyde 3-phosphate: step 2/5. The protein is Phosphoglycerate kinase of Sinorhizobium medicae (strain WSM419) (Ensifer medicae).